A 465-amino-acid polypeptide reads, in one-letter code: Auxin transporter-like protein 3 (465 aa).

Over 1 to 52 the chain is Cytoplasmic; sequence MTSEKVETVVAGNYLEMEREEEGSKSTTGKLSKFFWHGGSVYDAWFSCASNQ. Residues 53–70 form a helical membrane-spanning segment; it reads VAQVLLTLPYSFSQLGML. The Extracellular segment spans residues 71 to 72; that stretch reads SG. The helical transmembrane segment at 73-93 threads the bilayer; sequence ILFQIFYGLMGSWTAYIISVL. Topologically, residues 94–129 are cytoplasmic; that stretch reads YVEYRTRKEREKVDFRNHVIQWFEVLDGLLGKHWRN. The chain crosses the membrane as a helical span at residues 130–150; sequence LGLFFNCTFLLFGSVIQLIAC. Residues 151 to 165 lie on the Extracellular side of the membrane; sequence ASNIYYINDHLDKRT. Residues 166-186 traverse the membrane as a helical segment; the sequence is WTYIFGACCATTVFIPSFHNY. Over 187-189 the chain is Cytoplasmic; it reads RIW. A helical membrane pass occupies residues 190–210; that stretch reads SFLGLVMTTYTAWYMTIASIL. The Extracellular segment spans residues 211–225; sequence HGQAEDVKHSGPTKL. A helical transmembrane segment spans residues 226–246; that stretch reads VLYFTGATNILYTFGGHAVTV. Residues 247–259 are Cytoplasmic-facing; sequence EIMHAMWKPQKFK. The chain crosses the membrane as a helical span at residues 260 to 280; it reads MIYLIATLYVMTLTLPSAAAV. Residues 281 to 307 lie on the Extracellular side of the membrane; that stretch reads YWAFGDNLLTHSNALSLLPRTGFRDTA. Residues 308–328 form a helical membrane-spanning segment; the sequence is VILMLIHQFITFGFACTPLYF. The Cytoplasmic portion of the chain corresponds to 329 to 349; the sequence is VWEKFLGVHETKSLLKRALVR. A helical transmembrane segment spans residues 350–370; sequence LPVVIPIWFLAIIFPFFGPIN. The Extracellular portion of the chain corresponds to 371 to 374; sequence STVG. The helical transmembrane segment at 375 to 395 threads the bilayer; sequence SLLVSFTVYIIPALAHMVTFA. The Cytoplasmic segment spans residues 396–421; it reads SAPARENAVERPPSFLGGWVGLYSVN. The helical transmembrane segment at 422-442 threads the bilayer; sequence VFVAVWVLVVGFGLGGWASML. The Extracellular portion of the chain corresponds to 443-465; that stretch reads NFVHQIKTFGLFAKCFQCPPHKA.

Belongs to the amino acid/polyamine transporter 2 family. Amino acid/auxin permease (AAAP) (TC 2.A.18.1) subfamily. In terms of tissue distribution, shoots and roots of nodulating plants. Low levels in roots, nodules, stems, petioles, leaves, shoot apices and flowers.

The protein resides in the cell membrane. Carrier protein involved in proton-driven auxin influx. Mediates the formation of auxin gradient from developing leaves (site of auxin biosynthesis) to tips by contributing to the loading of auxin in vascular tissues and facilitating acropetal (base to tip) auxin transport within inner tissues of the root apex, and basipetal (tip to base) auxin transport within outer tissues of the root apex. May be involved in lateral roots and nodules formation. The polypeptide is Auxin transporter-like protein 3 (LAX3) (Medicago truncatula (Barrel medic)).